We begin with the raw amino-acid sequence, 545 residues long: Delta 8-(E)-sphingolipid desaturase (545 aa).

A Cytochrome b5 heme-binding domain is found at 1 to 82; it reads MASHTKDALL…MLAFQIGRIQ (82 aa). Heme contacts are provided by H42 and H65. The tract at residues 97-124 is disordered; it reads FRHYDENADSEEDDTSGQSQPPSPIFDA. A helical membrane pass occupies residues 227-247; that stretch reads LGWYSVSAVFLGCFWHQLVFS. The Histidine box-1 signature appears at 249-253; the sequence is HDAGH. Residues 262-282 form a helical membrane-spanning segment; sequence VDSIIGILIADFLGGLSLGWW. A Histidine box-2 motif is present at residues 286 to 290; it reads HNVHH. The next 2 helical transmembrane spans lie at 382 to 402 and 408 to 428; these read IAGQ…CSIP and LSFL…ITLS. A Histidine box-3 motif is present at residues 470-474; it reads QAIHH.

The protein belongs to the fatty acid desaturase type 1 family.

It is found in the membrane. The enzyme catalyses an N-acylsphing-4-enine + 2 Fe(II)-[cytochrome b5] + O2 + 2 H(+) = a (4E,8E)-4-sphinga-4,8-dienine ceramide + 2 Fe(III)-[cytochrome b5] + 2 H2O. Its pathway is lipid metabolism; sphingolipid metabolism. Delta(8)-fatty-acid desaturase which introduces a double bond at the 8-position in the long-chain base (LCB) of ceramides. Required for the formation of the di-unsaturated sphingoid base (E,E)-sphinga-4,8-dienine during glucosylceramide (GluCer) biosynthesis. Plays an important role in conidiation. The sequence is that of Delta 8-(E)-sphingolipid desaturase from Emericella nidulans (strain FGSC A4 / ATCC 38163 / CBS 112.46 / NRRL 194 / M139) (Aspergillus nidulans).